Consider the following 370-residue polypeptide: UDP-N-acetylglucosamine--N-acetylmuramyl-(pentapeptide) pyrophosphoryl-undecaprenol N-acetylglucosamine transferase (370 aa).

UDP-N-acetyl-alpha-D-glucosamine contacts are provided by residues Thr15–Gly17, Asn126, Arg169, Ser197, and Gln299.

This sequence belongs to the glycosyltransferase 28 family. MurG subfamily.

It is found in the cell inner membrane. The catalysed reaction is di-trans,octa-cis-undecaprenyl diphospho-N-acetyl-alpha-D-muramoyl-L-alanyl-D-glutamyl-meso-2,6-diaminopimeloyl-D-alanyl-D-alanine + UDP-N-acetyl-alpha-D-glucosamine = di-trans,octa-cis-undecaprenyl diphospho-[N-acetyl-alpha-D-glucosaminyl-(1-&gt;4)]-N-acetyl-alpha-D-muramoyl-L-alanyl-D-glutamyl-meso-2,6-diaminopimeloyl-D-alanyl-D-alanine + UDP + H(+). It functions in the pathway cell wall biogenesis; peptidoglycan biosynthesis. Its function is as follows. Cell wall formation. Catalyzes the transfer of a GlcNAc subunit on undecaprenyl-pyrophosphoryl-MurNAc-pentapeptide (lipid intermediate I) to form undecaprenyl-pyrophosphoryl-MurNAc-(pentapeptide)GlcNAc (lipid intermediate II). This chain is UDP-N-acetylglucosamine--N-acetylmuramyl-(pentapeptide) pyrophosphoryl-undecaprenol N-acetylglucosamine transferase, found in Methylorubrum populi (strain ATCC BAA-705 / NCIMB 13946 / BJ001) (Methylobacterium populi).